Reading from the N-terminus, the 464-residue chain is Bifunctional protein GlmU (464 aa).

The interval 1-232 (MKHDELAAVI…ADEAMGINDR (232 aa)) is pyrophosphorylase. UDP-N-acetyl-alpha-D-glucosamine is bound by residues 11-14 (LAAG), Lys25, Gln76, and 81-82 (GT). Residue Asp106 coordinates Mg(2+). Positions 143, 157, 172, and 230 each coordinate UDP-N-acetyl-alpha-D-glucosamine. Position 230 (Asn230) interacts with Mg(2+). The segment at 233-253 (VQLAQASALMRRRINENLMRA) is linker. Positions 254-464 (GVSFIDPEQT…RHDPKCKNKD (211 aa)) are N-acetyltransferase. Residues Arg336 and Lys354 each coordinate UDP-N-acetyl-alpha-D-glucosamine. The active-site Proton acceptor is the His366. Positions 369 and 380 each coordinate UDP-N-acetyl-alpha-D-glucosamine. Residues 389–390 (NY), Ser408, Ala426, and Arg443 contribute to the acetyl-CoA site.

This sequence in the N-terminal section; belongs to the N-acetylglucosamine-1-phosphate uridyltransferase family. It in the C-terminal section; belongs to the transferase hexapeptide repeat family. Homotrimer. Mg(2+) is required as a cofactor.

The protein resides in the cytoplasm. The enzyme catalyses alpha-D-glucosamine 1-phosphate + acetyl-CoA = N-acetyl-alpha-D-glucosamine 1-phosphate + CoA + H(+). It carries out the reaction N-acetyl-alpha-D-glucosamine 1-phosphate + UTP + H(+) = UDP-N-acetyl-alpha-D-glucosamine + diphosphate. Its pathway is nucleotide-sugar biosynthesis; UDP-N-acetyl-alpha-D-glucosamine biosynthesis; N-acetyl-alpha-D-glucosamine 1-phosphate from alpha-D-glucosamine 6-phosphate (route II): step 2/2. The protein operates within nucleotide-sugar biosynthesis; UDP-N-acetyl-alpha-D-glucosamine biosynthesis; UDP-N-acetyl-alpha-D-glucosamine from N-acetyl-alpha-D-glucosamine 1-phosphate: step 1/1. It participates in bacterial outer membrane biogenesis; LPS lipid A biosynthesis. Functionally, catalyzes the last two sequential reactions in the de novo biosynthetic pathway for UDP-N-acetylglucosamine (UDP-GlcNAc). The C-terminal domain catalyzes the transfer of acetyl group from acetyl coenzyme A to glucosamine-1-phosphate (GlcN-1-P) to produce N-acetylglucosamine-1-phosphate (GlcNAc-1-P), which is converted into UDP-GlcNAc by the transfer of uridine 5-monophosphate (from uridine 5-triphosphate), a reaction catalyzed by the N-terminal domain. In Syntrophotalea carbinolica (strain DSM 2380 / NBRC 103641 / GraBd1) (Pelobacter carbinolicus), this protein is Bifunctional protein GlmU.